A 307-amino-acid chain; its full sequence is tRNA-cytidine(32) 2-sulfurtransferase (307 aa).

The PP-loop motif signature appears at 44-49; that stretch reads SGGKDS. Residues cysteine 119, cysteine 122, and cysteine 210 each contribute to the [4Fe-4S] cluster site.

This sequence belongs to the TtcA family. In terms of assembly, homodimer. Mg(2+) serves as cofactor. It depends on [4Fe-4S] cluster as a cofactor.

The protein resides in the cytoplasm. It carries out the reaction cytidine(32) in tRNA + S-sulfanyl-L-cysteinyl-[cysteine desulfurase] + AH2 + ATP = 2-thiocytidine(32) in tRNA + L-cysteinyl-[cysteine desulfurase] + A + AMP + diphosphate + H(+). The protein operates within tRNA modification. In terms of biological role, catalyzes the ATP-dependent 2-thiolation of cytidine in position 32 of tRNA, to form 2-thiocytidine (s(2)C32). The sulfur atoms are provided by the cysteine/cysteine desulfurase (IscS) system. The polypeptide is tRNA-cytidine(32) 2-sulfurtransferase (Aliivibrio salmonicida (strain LFI1238) (Vibrio salmonicida (strain LFI1238))).